A 477-amino-acid chain; its full sequence is Octopamine receptor (477 aa).

The Extracellular portion of the chain corresponds to 1-55 (MGQAATHVDANYTLINYTEEVIEDDRDACAVADDPKYPSSFGITLAVPEWEAICT). 2 N-linked (GlcNAc...) asparagine glycosylation sites follow: Asn11 and Asn16. A helical transmembrane segment spans residues 56 to 78 (AIVLTLIIISTIVGNILVILSVF). Topologically, residues 79 to 88 (TYKPLRIVQN) are cytoplasmic. The chain crosses the membrane as a helical span at residues 89–110 (FFIVSLAVADLTVAILVLPLNV). Residues 111 to 127 (AYSILGQWVFGIYVCKM) lie on the Extracellular side of the membrane. A helical transmembrane segment spans residues 128-148 (WLTCDIMCCTSSILNLCAIAL). The Cytoplasmic segment spans residues 149–168 (DRYWAITDPINYAQKRTLER). The helical transmembrane segment at 169-191 (VLLMIGVVWVLSLIISSPPLLGW) threads the bilayer. The Extracellular portion of the chain corresponds to 192-216 (NDWPDVFEPDTPCRLTSQPGFVIFS). Residues 217–238 (SSGSFYIPLVIMTVVYFEIYLA) traverse the membrane as a helical segment. Over 239–405 (TKKRLRDRAK…LTRERRAART (167 aa)) the chain is Cytoplasmic. Disordered regions lie at residues 256–317 (SSGQ…SKDD) and 334–358 (VTDM…THED). 2 stretches are compositionally biased toward basic and acidic residues: residues 263–272 (NNKDDHHDQD) and 279–295 (NHNE…DNEK). Residues 296-312 (KKRTRKLTPKKKPKRKY) show a composition bias toward basic residues. The helical transmembrane segment at 406–427 (LGIIMGVFVVCWLPFFVIYLVI) threads the bilayer. The Extracellular portion of the chain corresponds to 428-439 (PFCASCCLSNKF). A helical membrane pass occupies residues 440-460 (INFITWLGYCNSALNPLIYTI). Residues 461–477 (FNMDFRRAFKKLLCMKP) lie on the Cytoplasmic side of the membrane.

It belongs to the G-protein coupled receptor 1 family.

The protein resides in the cell membrane. Receptor for octopamine. Octopamine (OA) is a neurotransmitter, neurohormone, and neuromodulator in invertebrates. The activity of this receptor is mediated by G proteins which activate adenylyl cyclase. In Heliothis virescens (Tobacco budworm moth), this protein is Octopamine receptor.